A 202-amino-acid chain; its full sequence is dTTP/UTP pyrophosphatase (202 aa).

Aspartate 76 (proton acceptor) is an active-site residue.

Belongs to the Maf family. YhdE subfamily. Requires a divalent metal cation as cofactor.

The protein resides in the cytoplasm. The enzyme catalyses dTTP + H2O = dTMP + diphosphate + H(+). It catalyses the reaction UTP + H2O = UMP + diphosphate + H(+). Functionally, nucleoside triphosphate pyrophosphatase that hydrolyzes dTTP and UTP. May have a dual role in cell division arrest and in preventing the incorporation of modified nucleotides into cellular nucleic acids. This Neisseria gonorrhoeae (strain ATCC 700825 / FA 1090) protein is dTTP/UTP pyrophosphatase.